Reading from the N-terminus, the 301-residue chain is UDP-N-acetylenolpyruvoylglucosamine reductase (301 aa).

One can recognise an FAD-binding PCMH-type domain in the interval 30–194; it reads VGGEPDYLVF…LSAKFALAPG (165 aa). Arginine 173 is a catalytic residue. Serine 223 acts as the Proton donor in catalysis. The active site involves glutamate 293.

This sequence belongs to the MurB family. FAD is required as a cofactor.

The protein resides in the cytoplasm. The catalysed reaction is UDP-N-acetyl-alpha-D-muramate + NADP(+) = UDP-N-acetyl-3-O-(1-carboxyvinyl)-alpha-D-glucosamine + NADPH + H(+). The protein operates within cell wall biogenesis; peptidoglycan biosynthesis. In terms of biological role, cell wall formation. In Streptococcus pneumoniae (strain CGSP14), this protein is UDP-N-acetylenolpyruvoylglucosamine reductase.